The sequence spans 242 residues: Pyridoxine 5'-phosphate synthase (242 aa).

Residue asparagine 7 participates in 3-amino-2-oxopropyl phosphate binding. Aspartate 9 to histidine 10 contributes to the 1-deoxy-D-xylulose 5-phosphate binding site. Arginine 18 serves as a coordination point for 3-amino-2-oxopropyl phosphate. Catalysis depends on histidine 43, which acts as the Proton acceptor. The 1-deoxy-D-xylulose 5-phosphate site is built by arginine 45 and histidine 50. The Proton acceptor role is filled by glutamate 70. Threonine 100 contacts 1-deoxy-D-xylulose 5-phosphate. Histidine 190 acts as the Proton donor in catalysis. Residues glycine 191 and glycine 212 to histidine 213 contribute to the 3-amino-2-oxopropyl phosphate site.

The protein belongs to the PNP synthase family. As to quaternary structure, homooctamer; tetramer of dimers.

Its subcellular location is the cytoplasm. It carries out the reaction 3-amino-2-oxopropyl phosphate + 1-deoxy-D-xylulose 5-phosphate = pyridoxine 5'-phosphate + phosphate + 2 H2O + H(+). It functions in the pathway cofactor biosynthesis; pyridoxine 5'-phosphate biosynthesis; pyridoxine 5'-phosphate from D-erythrose 4-phosphate: step 5/5. Functionally, catalyzes the complicated ring closure reaction between the two acyclic compounds 1-deoxy-D-xylulose-5-phosphate (DXP) and 3-amino-2-oxopropyl phosphate (1-amino-acetone-3-phosphate or AAP) to form pyridoxine 5'-phosphate (PNP) and inorganic phosphate. This is Pyridoxine 5'-phosphate synthase from Thermodesulfovibrio yellowstonii (strain ATCC 51303 / DSM 11347 / YP87).